A 338-amino-acid polypeptide reads, in one-letter code: Phenylalanine--tRNA ligase alpha subunit (338 aa).

Residue Glu-259 participates in Mg(2+) binding.

The protein belongs to the class-II aminoacyl-tRNA synthetase family. Phe-tRNA synthetase alpha subunit type 1 subfamily. Tetramer of two alpha and two beta subunits. Mg(2+) serves as cofactor.

It localises to the cytoplasm. The catalysed reaction is tRNA(Phe) + L-phenylalanine + ATP = L-phenylalanyl-tRNA(Phe) + AMP + diphosphate + H(+). The chain is Phenylalanine--tRNA ligase alpha subunit from Janthinobacterium sp. (strain Marseille) (Minibacterium massiliensis).